A 344-amino-acid polypeptide reads, in one-letter code: Unsaturated rhamnogalacturonyl hydrolase YesR (344 aa).

Residues 30–31 (DW), N74, and 118–128 (QHTVNAAEYVF) contribute to the substrate site. The active-site Proton donor is D135. Substrate is bound by residues 198–202 (RANGW) and 308–309 (NA).

This sequence belongs to the glycosyl hydrolase 105 family. In terms of assembly, monomer.

Its subcellular location is the cytoplasm. It catalyses the reaction 2-O-(4-deoxy-beta-L-threo-hex-4-enopyranuronosyl)-alpha-L-rhamnose + H2O = 5-dehydro-4-deoxy-D-glucuronate + L-rhamnopyranose. In terms of biological role, catalyzes the hydrolysis of unsaturated rhamnogalacturonan disaccharide to yield unsaturated D-galacturonic acid and L-rhamnose. It cannot act on unsaturated glucuronyl hydrolase (UGL) substrates containing unsaturated D-glucuronic acid at the non-reducing terminus, although the active pockets of YesR and UGL are very similar. In Bacillus subtilis (strain 168), this protein is Unsaturated rhamnogalacturonyl hydrolase YesR (yesR).